Here is a 275-residue protein sequence, read N- to C-terminus: Nitrate import permease protein NrtB (275 aa).

7 consecutive transmembrane segments (helical) span residues 25–45, 89–109, 120–140, 147–167, 189–209, 213–233, and 238–258; these read VIRPAVAIAVLLVVWQILCSG, VAVGFSAAAVVGIALGILIGS, IFQVLRTIPPLAWLPIALAAL, AIFVIFITAIWPIVINTTVGA, FFNILFPAAVPYIFTGLRIGI, WLAIVAAEMLIGGVGIGFFIW, and SSLISEIIIALIYVGIVGLLL. The region spanning 82–262 is the ABC transmembrane type-1 domain; that stretch reads IFASLTRVAV…IVGLLLDRFI (181 aa).

This sequence belongs to the binding-protein-dependent transport system permease family. CysTW subfamily. In terms of assembly, the complex is composed of two ATP-binding proteins (NrtC and NrtD), two transmembrane proteins (NrtB) and a solute-binding protein (NrtA).

The protein resides in the cell inner membrane. Part of the ABC transporter complex NrtABCD involved in nitrate uptake. The complex is probably also involved in nitrite transport. Probably responsible for the translocation of the substrate across the membrane. The polypeptide is Nitrate import permease protein NrtB (nrtB) (Synechocystis sp. (strain ATCC 27184 / PCC 6803 / Kazusa)).